Consider the following 353-residue polypeptide: Histidinol-phosphate aminotransferase (353 aa).

An N6-(pyridoxal phosphate)lysine modification is found at lysine 218.

The protein belongs to the class-II pyridoxal-phosphate-dependent aminotransferase family. Histidinol-phosphate aminotransferase subfamily. As to quaternary structure, homodimer. It depends on pyridoxal 5'-phosphate as a cofactor.

It carries out the reaction L-histidinol phosphate + 2-oxoglutarate = 3-(imidazol-4-yl)-2-oxopropyl phosphate + L-glutamate. It functions in the pathway amino-acid biosynthesis; L-histidine biosynthesis; L-histidine from 5-phospho-alpha-D-ribose 1-diphosphate: step 7/9. This Synechococcus sp. (strain JA-3-3Ab) (Cyanobacteria bacterium Yellowstone A-Prime) protein is Histidinol-phosphate aminotransferase.